Reading from the N-terminus, the 209-residue chain is Protein GrpE (209 aa).

Residues 1–13 (MSNDSSKAKQNQV) are compositionally biased toward polar residues. The segment at 1 to 33 (MSNDSSKAKQNQVDEAVEGEILTESEVETGNDE) is disordered. Acidic residues predominate over residues 15–31 (EAVEGEILTESEVETGN).

The protein belongs to the GrpE family. As to quaternary structure, homodimer.

The protein localises to the cytoplasm. Its function is as follows. Participates actively in the response to hyperosmotic and heat shock by preventing the aggregation of stress-denatured proteins, in association with DnaK and GrpE. It is the nucleotide exchange factor for DnaK and may function as a thermosensor. Unfolded proteins bind initially to DnaJ; upon interaction with the DnaJ-bound protein, DnaK hydrolyzes its bound ATP, resulting in the formation of a stable complex. GrpE releases ADP from DnaK; ATP binding to DnaK triggers the release of the substrate protein, thus completing the reaction cycle. Several rounds of ATP-dependent interactions between DnaJ, DnaK and GrpE are required for fully efficient folding. In Shewanella woodyi (strain ATCC 51908 / MS32), this protein is Protein GrpE.